Consider the following 429-residue polypeptide: Formate-dependent phosphoribosylglycinamide formyltransferase (429 aa).

N(1)-(5-phospho-beta-D-ribosyl)glycinamide contacts are provided by residues 26 to 27 (EL) and Glu-86. Residues Arg-118, Lys-159, 199–202 (EEHI), and Glu-207 each bind ATP. An ATP-grasp domain is found at 123-319 (ETLVKEAKVP…EFGLHLRAVL (197 aa)). Mg(2+)-binding residues include Glu-276 and Glu-288. Residues Asp-295, Lys-375, and 382-383 (RR) contribute to the N(1)-(5-phospho-beta-D-ribosyl)glycinamide site.

Belongs to the PurK/PurT family. Homodimer.

It carries out the reaction N(1)-(5-phospho-beta-D-ribosyl)glycinamide + formate + ATP = N(2)-formyl-N(1)-(5-phospho-beta-D-ribosyl)glycinamide + ADP + phosphate + H(+). The protein operates within purine metabolism; IMP biosynthesis via de novo pathway; N(2)-formyl-N(1)-(5-phospho-D-ribosyl)glycinamide from N(1)-(5-phospho-D-ribosyl)glycinamide (formate route): step 1/1. Functionally, involved in the de novo purine biosynthesis. Catalyzes the transfer of formate to 5-phospho-ribosyl-glycinamide (GAR), producing 5-phospho-ribosyl-N-formylglycinamide (FGAR). Formate is provided by PurU via hydrolysis of 10-formyl-tetrahydrofolate. The chain is Formate-dependent phosphoribosylglycinamide formyltransferase from Pyrococcus furiosus (strain ATCC 43587 / DSM 3638 / JCM 8422 / Vc1).